The primary structure comprises 349 residues: Bifunctional nitrilase/nitrile hydratase NIT4A (349 aa).

One can recognise a CN hydrolase domain in the interval 29 to 301 (VRATVVQAST…EALISADLDL (273 aa)). Residue E69 is the Proton acceptor of the active site. K156 is a catalytic residue. The active-site Nucleophile is the C190.

The protein belongs to the carbon-nitrogen hydrolase superfamily. Nitrilase family. Ubiquitous.

The catalysed reaction is L-asparagine = 3-cyano-L-alanine + H2O. It catalyses the reaction 3-cyano-L-alanine + 2 H2O = L-aspartate + NH4(+). Functionally, involved in the cyanide detoxification pathway. Has nitrilase and nitrile-hydratase activity in the ratio 4.0:1, producing both asparagine and aspartic acid from beta-cyano-L-alanine (Ala(CN)). Can also use 3-phenylpropionitrile as substrate, but not indole-3-acetonitrile. This is Bifunctional nitrilase/nitrile hydratase NIT4A (NIT4A) from Lupinus angustifolius (Narrow-leaved blue lupine).